Consider the following 369-residue polypeptide: DNA replication and repair protein RecF (369 aa).

30-37 (GENGQGKT) provides a ligand contact to ATP.

It belongs to the RecF family.

Its subcellular location is the cytoplasm. The RecF protein is involved in DNA metabolism; it is required for DNA replication and normal SOS inducibility. RecF binds preferentially to single-stranded, linear DNA. It also seems to bind ATP. This Anaeromyxobacter sp. (strain Fw109-5) protein is DNA replication and repair protein RecF.